Reading from the N-terminus, the 358-residue chain is Probable protein phosphatase 2C 68 (358 aa).

Positions 74-352 (RHGAASVAGR…DNISVVVVDL (279 aa)) constitute a PPM-type phosphatase domain. Asp117, Gly118, Asp298, and Asp343 together coordinate Mn(2+).

The protein belongs to the PP2C family. The cofactor is Mg(2+). It depends on Mn(2+) as a cofactor.

It is found in the nucleus. It localises to the cytoplasm. The protein resides in the cytosol. The enzyme catalyses O-phospho-L-seryl-[protein] + H2O = L-seryl-[protein] + phosphate. It catalyses the reaction O-phospho-L-threonyl-[protein] + H2O = L-threonyl-[protein] + phosphate. Involved in the regulation of abiotic stress responses. Acts as a negative regulator of abscisic acid (ABA) signaling and positive regulator of abiotic stress signaling. May be involved in panicle development. The polypeptide is Probable protein phosphatase 2C 68 (Oryza sativa subsp. japonica (Rice)).